A 346-amino-acid chain; its full sequence is Peripherin-2 (346 aa).

Topologically, residues methionine 1–asparagine 24 are cytoplasmic. The chain crosses the membrane as a helical span at residues tryptophan 25 to isoleucine 43. Residues glutamate 44–proline 61 are Lumenal-facing. The helical transmembrane segment at asparagine 62–lysine 80 threads the bilayer. Over isoleucine 81 to lysine 99 the chain is Cytoplasmic. A helical membrane pass occupies residues leucine 100–arginine 123. Topologically, residues glycine 124–serine 264 are lumenal. Residue asparagine 229 is glycosylated (N-linked (GlcNAc...) asparagine). Residues methionine 265–leucine 290 form a helical membrane-spanning segment. The Cytoplasmic segment spans residues glutamate 291–glycine 346. Residues glutamine 341–glycine 346 form an interaction with MREG region.

It belongs to the PRPH2/ROM1 family. As to quaternary structure, homodimer; disulfide-linked. Forms a homotetramer. Forms a heterotetramer with ROM1. Homotetramer and heterotetramer core complexes go on to form higher order complexes by formation of intermolecular disulfide bonds. Interacts with MREG. Interacts with STX3. Interacts with SNAP25. Retina (photoreceptor). In rim region of ROS (rod outer segment) disks.

Its subcellular location is the membrane. It is found in the cell projection. The protein resides in the cilium. The protein localises to the photoreceptor outer segment. It localises to the photoreceptor inner segment. Functionally, essential for retina photoreceptor outer segment disk morphogenesis, may also play a role with ROM1 in the maintenance of outer segment disk structure. Required for the maintenance of retinal outer nuclear layer thickness. Required for the correct development and organization of the photoreceptor inner segment. This chain is Peripherin-2 (Prph2), found in Rattus norvegicus (Rat).